Here is a 160-residue protein sequence, read N- to C-terminus: Transcription elongation factor GreA (160 aa).

Residues 50 to 70 adopt a coiled-coil conformation; it reads AAREQQSFNEGRIQELEAKLS.

This sequence belongs to the GreA/GreB family.

Functionally, necessary for efficient RNA polymerase transcription elongation past template-encoded arresting sites. The arresting sites in DNA have the property of trapping a certain fraction of elongating RNA polymerases that pass through, resulting in locked ternary complexes. Cleavage of the nascent transcript by cleavage factors such as GreA or GreB allows the resumption of elongation from the new 3'terminus. GreA releases sequences of 2 to 3 nucleotides. This Legionella pneumophila (strain Paris) protein is Transcription elongation factor GreA.